A 291-amino-acid polypeptide reads, in one-letter code: Nucleotide-binding protein MSMEG_3079/MSMEI_3001 (291 aa).

14 to 21 (GLSGAGRG) serves as a coordination point for ATP. Residue 65–68 (DVRS) coordinates GTP.

Belongs to the RapZ-like family.

In terms of biological role, displays ATPase and GTPase activities. This Mycolicibacterium smegmatis (strain ATCC 700084 / mc(2)155) (Mycobacterium smegmatis) protein is Nucleotide-binding protein MSMEG_3079/MSMEI_3001.